A 96-amino-acid polypeptide reads, in one-letter code: Aspartyl/glutamyl-tRNA(Asn/Gln) amidotransferase subunit C (96 aa).

Belongs to the GatC family. Heterotrimer of A, B and C subunits.

The catalysed reaction is L-glutamyl-tRNA(Gln) + L-glutamine + ATP + H2O = L-glutaminyl-tRNA(Gln) + L-glutamate + ADP + phosphate + H(+). The enzyme catalyses L-aspartyl-tRNA(Asn) + L-glutamine + ATP + H2O = L-asparaginyl-tRNA(Asn) + L-glutamate + ADP + phosphate + 2 H(+). In terms of biological role, allows the formation of correctly charged Asn-tRNA(Asn) or Gln-tRNA(Gln) through the transamidation of misacylated Asp-tRNA(Asn) or Glu-tRNA(Gln) in organisms which lack either or both of asparaginyl-tRNA or glutaminyl-tRNA synthetases. The reaction takes place in the presence of glutamine and ATP through an activated phospho-Asp-tRNA(Asn) or phospho-Glu-tRNA(Gln). This is Aspartyl/glutamyl-tRNA(Asn/Gln) amidotransferase subunit C from Fusobacterium nucleatum subsp. nucleatum (strain ATCC 25586 / DSM 15643 / BCRC 10681 / CIP 101130 / JCM 8532 / KCTC 2640 / LMG 13131 / VPI 4355).